A 384-amino-acid polypeptide reads, in one-letter code: Lipid-A-disaccharide synthase (384 aa).

It belongs to the LpxB family.

The catalysed reaction is a lipid X + a UDP-2-N,3-O-bis[(3R)-3-hydroxyacyl]-alpha-D-glucosamine = a lipid A disaccharide + UDP + H(+). The protein operates within bacterial outer membrane biogenesis; LPS lipid A biosynthesis. Functionally, condensation of UDP-2,3-diacylglucosamine and 2,3-diacylglucosamine-1-phosphate to form lipid A disaccharide, a precursor of lipid A, a phosphorylated glycolipid that anchors the lipopolysaccharide to the outer membrane of the cell. This is Lipid-A-disaccharide synthase from Geobacter sulfurreducens (strain ATCC 51573 / DSM 12127 / PCA).